The primary structure comprises 65 residues: Small ribosomal subunit protein bS21 (65 aa).

Residues 39–65 are disordered; sequence EKPSIKRKKKAIAARKRALKKQRKMMD. The segment covering 43-65 has biased composition (basic residues); that stretch reads IKRKKKAIAARKRALKKQRKMMD.

It belongs to the bacterial ribosomal protein bS21 family.

The protein is Small ribosomal subunit protein bS21 of Pelobacter propionicus (strain DSM 2379 / NBRC 103807 / OttBd1).